A 347-amino-acid polypeptide reads, in one-letter code: D-alanine--D-alanine ligase (347 aa).

The ATP-grasp domain occupies 131–333 (KRVLESAGIA…YPDLIERLVE (203 aa)). Residue 161 to 216 (EEELTYPVFTKPSNMGSSVGISKSENQEELRQALKLAFQYDSRVLVEQGVNAREIE) coordinates ATP. Mg(2+) is bound by residues aspartate 287, glutamate 300, and asparagine 302.

The protein belongs to the D-alanine--D-alanine ligase family. Requires Mg(2+) as cofactor. Mn(2+) serves as cofactor.

It localises to the cytoplasm. The catalysed reaction is 2 D-alanine + ATP = D-alanyl-D-alanine + ADP + phosphate + H(+). It functions in the pathway cell wall biogenesis; peptidoglycan biosynthesis. Cell wall formation. This Streptococcus pneumoniae (strain Hungary19A-6) protein is D-alanine--D-alanine ligase.